Consider the following 86-residue polypeptide: Muscarinic toxin 7 (86 aa).

The N-terminal stretch at 1 to 21 (MKTLLLTLVVVTIVCLDLGYT) is a signal peptide. 3 finger loop regions span residues 23-37 (TCVK…TSED), 44-63 (LCFK…TRGC), and 66-78 (TCPK…VINC). 4 disulfide bridges follow: Cys-24–Cys-45, Cys-38–Cys-63, Cys-67–Cys-78, and Cys-79–Cys-84.

It belongs to the three-finger toxin family. Short-chain subfamily. Aminergic toxin sub-subfamily. In terms of tissue distribution, expressed by the venom gland.

The protein localises to the secreted. Functionally, binds specifically and irreversibly to an allosteric site of the muscarinic acetylcholine M1 receptor (CHRM1) at subnanomolar concentrations and shows a very slow dissociation rate. It also inhibits agonist-mediated guanosine 5'-O-(3'-thiotriphosphate) (GTP-g-S) binding and downstream signaling, and decreases the dissociation rate of orthosteric antagonists (N-methylscopolamine (NMS) or pirenzepine). Is a potent negative allosteric modulator (NAM) for CHRM1 activation and a positive allosteric modulator (PAM) for antagonist binding. The polypeptide is Muscarinic toxin 7 (Dendroaspis angusticeps (Eastern green mamba)).